We begin with the raw amino-acid sequence, 590 residues long: Membrane protein insertase YidC (590 aa).

5 helical membrane passes run 5–25 (SVIG…FMKP), 368–388 (GLII…LSLA), 433–453 (LGGC…FYVF), 483–503 (LPLY…TVFF), and 519–539 (IMMW…PAGL).

Belongs to the OXA1/ALB3/YidC family. Type 1 subfamily. In terms of assembly, interacts with the Sec translocase complex via SecD. Specifically interacts with transmembrane segments of nascent integral membrane proteins during membrane integration.

The protein localises to the cell inner membrane. In terms of biological role, required for the insertion and/or proper folding and/or complex formation of integral membrane proteins into the membrane. Involved in integration of membrane proteins that insert both dependently and independently of the Sec translocase complex, as well as at least some lipoproteins. Aids folding of multispanning membrane proteins. This is Membrane protein insertase YidC from Chlorobaculum tepidum (strain ATCC 49652 / DSM 12025 / NBRC 103806 / TLS) (Chlorobium tepidum).